A 339-amino-acid polypeptide reads, in one-letter code: Ribosomal RNA small subunit methyltransferase C (339 aa).

The protein belongs to the methyltransferase superfamily. RsmC family. Monomer.

It localises to the cytoplasm. It catalyses the reaction guanosine(1207) in 16S rRNA + S-adenosyl-L-methionine = N(2)-methylguanosine(1207) in 16S rRNA + S-adenosyl-L-homocysteine + H(+). Specifically methylates the guanine in position 1207 of 16S rRNA in the 30S particle. The chain is Ribosomal RNA small subunit methyltransferase C from Aliivibrio fischeri (strain MJ11) (Vibrio fischeri).